Consider the following 121-residue polypeptide: uncharacterized protein (121 aa).

A helical membrane pass occupies residues 6-26; it reads ITTASILLVVIVAFCAAAPMI.

It localises to the membrane. This is an uncharacterized protein from Caenorhabditis elegans.